The following is a 191-amino-acid chain: Adenylate kinase (191 aa).

12–17 (GSGKTT) serves as a coordination point for ATP. Residues 34-63 (STGDLLRAESAKKTERGLLIEKFTSQGELV) form an NMP region. Residues Thr35, Arg40, 61 to 63 (ELV), 88 to 91 (GYPR), and Gln95 each bind AMP. The interval 130–136 (GRSRGAD) is LID. Arg131 is an ATP binding site. Residues Arg133 and Arg145 each coordinate AMP. Arg173 is a binding site for ATP.

It belongs to the adenylate kinase family. In terms of assembly, monomer.

The protein resides in the cytoplasm. The catalysed reaction is AMP + ATP = 2 ADP. It functions in the pathway purine metabolism; AMP biosynthesis via salvage pathway; AMP from ADP: step 1/1. Catalyzes the reversible transfer of the terminal phosphate group between ATP and AMP. Plays an important role in cellular energy homeostasis and in adenine nucleotide metabolism. The sequence is that of Adenylate kinase from Helicobacter pylori (strain ATCC 700392 / 26695) (Campylobacter pylori).